The primary structure comprises 82 residues: Small ribosomal subunit protein uS17 (82 aa).

This sequence belongs to the universal ribosomal protein uS17 family. In terms of assembly, part of the 30S ribosomal subunit.

One of the primary rRNA binding proteins, it binds specifically to the 5'-end of 16S ribosomal RNA. This chain is Small ribosomal subunit protein uS17, found in Shewanella halifaxensis (strain HAW-EB4).